We begin with the raw amino-acid sequence, 228 residues long: Protein GrpE (228 aa).

A compositionally biased stretch (basic and acidic residues) spans 1 to 22 (MDDKQKTNEEVKASSFDSEKSS). The disordered stretch occupies residues 1–71 (MDDKQKTNEE…DQTNTNNNEL (71 aa)). Over residues 38-53 (QNVQHDNGSNPAQKQN) the composition is skewed to polar residues.

Belongs to the GrpE family. As to quaternary structure, homodimer.

It is found in the cytoplasm. In terms of biological role, participates actively in the response to hyperosmotic and heat shock by preventing the aggregation of stress-denatured proteins, in association with DnaK and GrpE. It is the nucleotide exchange factor for DnaK and may function as a thermosensor. Unfolded proteins bind initially to DnaJ; upon interaction with the DnaJ-bound protein, DnaK hydrolyzes its bound ATP, resulting in the formation of a stable complex. GrpE releases ADP from DnaK; ATP binding to DnaK triggers the release of the substrate protein, thus completing the reaction cycle. Several rounds of ATP-dependent interactions between DnaJ, DnaK and GrpE are required for fully efficient folding. This is Protein GrpE from Coprothermobacter proteolyticus (strain ATCC 35245 / DSM 5265 / OCM 4 / BT).